The chain runs to 48 residues: Fimbrial assembly protein, serogroup F1 (48 aa).

The protein is Fimbrial assembly protein, serogroup F1 (fimB) of Dichelobacter nodosus (Bacteroides nodosus).